The sequence spans 102 residues: Small ribosomal subunit protein uS10 (102 aa).

The protein belongs to the universal ribosomal protein uS10 family. Part of the 30S ribosomal subunit.

In terms of biological role, involved in the binding of tRNA to the ribosomes. This chain is Small ribosomal subunit protein uS10, found in Trichlorobacter lovleyi (strain ATCC BAA-1151 / DSM 17278 / SZ) (Geobacter lovleyi).